Here is a 777-residue protein sequence, read N- to C-terminus: Lon protease (777 aa).

The Lon N-terminal domain occupies 11–204; sequence IPVLPLRDVV…FLMAIMETEI (194 aa). Residue 356 to 363 coordinates ATP; that stretch reads GPPGVGKT. A Lon proteolytic domain is found at 592 to 773; that stretch reads LNQIGQVVGL…EEVLKIALEN (182 aa). Catalysis depends on residues S679 and K722.

This sequence belongs to the peptidase S16 family. Homohexamer. Organized in a ring with a central cavity.

It is found in the cytoplasm. It carries out the reaction Hydrolysis of proteins in presence of ATP.. Its function is as follows. ATP-dependent serine protease that mediates the selective degradation of mutant and abnormal proteins as well as certain short-lived regulatory proteins. Required for cellular homeostasis and for survival from DNA damage and developmental changes induced by stress. Degrades polypeptides processively to yield small peptide fragments that are 5 to 10 amino acids long. Binds to DNA in a double-stranded, site-specific manner. The sequence is that of Lon protease from Buchnera aphidicola subsp. Schizaphis graminum (strain Sg).